The sequence spans 104 residues: uncharacterized protein (104 aa).

This is an uncharacterized protein from Mycoplasma genitalium (strain ATCC 33530 / DSM 19775 / NCTC 10195 / G37) (Mycoplasmoides genitalium).